Consider the following 286-residue polypeptide: tRNA (guanine-N(7)-)-methyltransferase (286 aa).

2 positions are modified to phosphoserine: serine 7 and serine 59. Residues glycine 103, 126–127 (EI), 161–162 (NA), and cysteine 181 each bind S-adenosyl-L-methionine. Residue aspartate 184 is part of the active site. An S-adenosyl-L-methionine-binding site is contributed by 259 to 261 (TEE).

It belongs to the class I-like SAM-binding methyltransferase superfamily. TrmB family. As to quaternary structure, forms a complex with TRM82.

Its subcellular location is the nucleus. The catalysed reaction is guanosine(46) in tRNA + S-adenosyl-L-methionine = N(7)-methylguanosine(46) in tRNA + S-adenosyl-L-homocysteine. The protein operates within tRNA modification; N(7)-methylguanine-tRNA biosynthesis. Functionally, methyltransferase that catalyzes the formation of N(7)-methylguanine at position 46 (m7G46) in tRNA, a modification required to maintain stability of tRNAs; its absence resulting in tRNA decay. Both the D-stem and T-stem structures of tRNAs are required for efficient methyltransferase activity. This is tRNA (guanine-N(7)-)-methyltransferase from Saccharomyces cerevisiae (strain YJM789) (Baker's yeast).